Here is an 847-residue protein sequence, read N- to C-terminus: Alpha-glucuronidase (847 aa).

The signal sequence occupies residues 1–19; sequence MVIRSLLLLLLAAIVPVFA. N-linked (GlcNAc...) asparagine glycans are attached at residues Asn52, Asn238, Asn321, Asn353, Asn586, Asn692, Asn740, and Asn767.

Belongs to the glycosyl hydrolase 67 family.

Its subcellular location is the secreted. The enzyme catalyses an alpha-D-glucuronoside + H2O = D-glucuronate + an alcohol. Functionally, releases 4-O-methylglucuronic acid from xylan. The polypeptide is Alpha-glucuronidase (Hypocrea jecorina (Trichoderma reesei)).